Reading from the N-terminus, the 703-residue chain is NADH-quinone oxidoreductase chain 12 (703 aa).

Transmembrane regions (helical) follow at residues 4–24 (FVLFAPLIASLIAGLGWRAIG), 30–50 (YLTTGVLFLSCLISWYLFLSF), 79–99 (LTAIMLIVVTTVSALVHMYSL), 116–136 (ARFFAYLSFFTFAMLMLVTAD), 138–158 (LLQMFFGWEGVGVASYLLIGF), 179–199 (GDFGFLLGIFGIYWLTGSVQF), 224–244 (ANLLGFLLFVGAMGKSAQLLL), 256–276 (TPVSALIHAATMVTAGVFLVC), 290–310 (NFIVIIGATTAFFAATVGLVQ), 325–345 (LGYMFVAAGVGVYSAAMFHLL), 346–366 (THAFFKAMLFLGAGSVIHAMH), 381–401 (IPLTFWAMMIGTFAITGVGIP), 415–435 (AIIESAYAGSGYAFWLLVIAA), 475–495 (LGVLAIGAVFAGMVWYGPFFG), 580–600 (VSPFVAMVLGLITAWTFYIAN), and 679–699 (LFHYAFAMVLGIVGLLIWVMM).

This sequence belongs to the complex I subunit 5 family. NDH-1 is composed of at least 14 different subunits, Nqo1 to Nqo14. The complex has a L-shaped structure, with the hydrophobic arm (subunits Nqo7, Nqo8, Nqo10 to Nqo14) embedded in the inner membrane and the hydrophilic peripheral arm (subunits Nqo1 to Nqo6, Nqo9) protruding into the bacterial cytoplasm. The hydrophilic domain contains all the redox centers.

The protein resides in the cell inner membrane. It catalyses the reaction a quinone + NADH + 5 H(+)(in) = a quinol + NAD(+) + 4 H(+)(out). Functionally, NDH-1 shuttles electrons from NADH, via FMN and iron-sulfur (Fe-S) centers, to quinones in the respiratory chain. The immediate electron acceptor for the enzyme in this species is believed to be ubiquinone. Couples the redox reaction to proton translocation (for every two electrons transferred, four hydrogen ions are translocated across the cytoplasmic membrane), and thus conserves the redox energy in a proton gradient. The polypeptide is NADH-quinone oxidoreductase chain 12 (Paracoccus denitrificans).